A 174-amino-acid polypeptide reads, in one-letter code: Guided entry of tail-anchored proteins factor 1 (174 aa).

Over 1–8 (MSSAAADH) the chain is Lumenal. A helical transmembrane segment spans residues 9–29 (WAWLLVLSFVFGCNVLRILLP). Residues 30–99 (SFSSFMSRVL…VKARTAQLAK (70 aa)) are Cytoplasmic-facing. Positions 39–94 (LQKDAEQESQMRAEIQDMKQELSTVNMMDEFARYARLERKINKMTDKLKTHVKART) form a coiled coil. Residues 39-97 (LQKDAEQESQMRAEIQDMKQELSTVNMMDEFARYARLERKINKMTDKLKTHVKARTAQL) form an interaction with GET3/TRC40 region. A helical transmembrane segment spans residues 100 to 120 (IKWVISVAFYVLQAALMISLI). Residues 121–148 (WKYYSVPVAVVPSKWITPLDRLVAFPTR) are Lumenal-facing. A helical transmembrane segment spans residues 149–169 (VAGGVGITCWILVCNKVVAIV). Over 170–174 (LHPFS) the chain is Cytoplasmic.

The protein belongs to the WRB/GET1 family. Component of the Golgi to ER traffic (GET) complex, which is composed of GET1/WRB, CAMLG/GET2 and GET3/TRC40. Within the complex, GET1 and CAMLG form a heterotetramer which is stabilized by phosphatidylinositol binding and which binds to the GET3 homodimer. Interacts with CAMLG (via C-terminus). GET3 shows a higher affinity for CAMLG than for GET1.

It localises to the endoplasmic reticulum membrane. In terms of biological role, required for the post-translational delivery of tail-anchored (TA) proteins to the endoplasmic reticulum (ER). Together with CAMLG/GET2, acts as a membrane receptor for soluble GET3/TRC40, which recognizes and selectively binds the transmembrane domain of TA proteins in the cytosol. Required to ensure correct topology and ER insertion of CAMLG. This Homo sapiens (Human) protein is Guided entry of tail-anchored proteins factor 1.